The primary structure comprises 148 residues: Phosphoribosyl-AMP cyclohydrolase (148 aa).

Asp91 is a Mg(2+) binding site. Residue Cys92 participates in Zn(2+) binding. Mg(2+) is bound by residues Asp93 and Asp95. Residues Cys109 and Cys116 each contribute to the Zn(2+) site.

Belongs to the PRA-CH family. As to quaternary structure, homodimer. The cofactor is Mg(2+). Zn(2+) serves as cofactor.

The protein resides in the cytoplasm. The catalysed reaction is 1-(5-phospho-beta-D-ribosyl)-5'-AMP + H2O = 1-(5-phospho-beta-D-ribosyl)-5-[(5-phospho-beta-D-ribosylamino)methylideneamino]imidazole-4-carboxamide. It functions in the pathway amino-acid biosynthesis; L-histidine biosynthesis; L-histidine from 5-phospho-alpha-D-ribose 1-diphosphate: step 3/9. Its function is as follows. Catalyzes the hydrolysis of the adenine ring of phosphoribosyl-AMP. The protein is Phosphoribosyl-AMP cyclohydrolase of Rhodopseudomonas palustris (strain HaA2).